Here is a 439-residue protein sequence, read N- to C-terminus: Histidinol dehydrogenase (439 aa).

Residues Tyr-132, Gln-194, and Asn-217 each coordinate NAD(+). 3 residues coordinate substrate: Ser-244, Gln-266, and His-269. Positions 266 and 269 each coordinate Zn(2+). Active-site proton acceptor residues include Glu-335 and His-336. Residues His-336, Asp-369, Glu-423, and His-428 each contribute to the substrate site. Asp-369 is a Zn(2+) binding site. Zn(2+) is bound at residue His-428.

It belongs to the histidinol dehydrogenase family. Zn(2+) is required as a cofactor.

The catalysed reaction is L-histidinol + 2 NAD(+) + H2O = L-histidine + 2 NADH + 3 H(+). Its pathway is amino-acid biosynthesis; L-histidine biosynthesis; L-histidine from 5-phospho-alpha-D-ribose 1-diphosphate: step 9/9. In terms of biological role, catalyzes the sequential NAD-dependent oxidations of L-histidinol to L-histidinaldehyde and then to L-histidine. The protein is Histidinol dehydrogenase (his2) of Schizosaccharomyces pombe (strain 972 / ATCC 24843) (Fission yeast).